A 238-amino-acid polypeptide reads, in one-letter code: tRNA1(Val) (adenine(37)-N6)-methyltransferase (238 aa).

Belongs to the methyltransferase superfamily. tRNA (adenine-N(6)-)-methyltransferase family.

It is found in the cytoplasm. The catalysed reaction is adenosine(37) in tRNA1(Val) + S-adenosyl-L-methionine = N(6)-methyladenosine(37) in tRNA1(Val) + S-adenosyl-L-homocysteine + H(+). Its function is as follows. Specifically methylates the adenine in position 37 of tRNA(1)(Val) (anticodon cmo5UAC). The protein is tRNA1(Val) (adenine(37)-N6)-methyltransferase of Shewanella baltica (strain OS185).